The following is a 160-amino-acid chain: NAD(P)H-quinone oxidoreductase subunit I, chloroplastic (160 aa).

4Fe-4S ferredoxin-type domains lie at Gly55–Lys84 and Leu95–Glu124. Positions 64, 67, 70, 74, 104, 107, 110, and 114 each coordinate [4Fe-4S] cluster.

Belongs to the complex I 23 kDa subunit family. NDH is composed of at least 16 different subunits, 5 of which are encoded in the nucleus. [4Fe-4S] cluster serves as cofactor.

It is found in the plastid. It localises to the chloroplast thylakoid membrane. It carries out the reaction a plastoquinone + NADH + (n+1) H(+)(in) = a plastoquinol + NAD(+) + n H(+)(out). The enzyme catalyses a plastoquinone + NADPH + (n+1) H(+)(in) = a plastoquinol + NADP(+) + n H(+)(out). In terms of biological role, NDH shuttles electrons from NAD(P)H:plastoquinone, via FMN and iron-sulfur (Fe-S) centers, to quinones in the photosynthetic chain and possibly in a chloroplast respiratory chain. The immediate electron acceptor for the enzyme in this species is believed to be plastoquinone. Couples the redox reaction to proton translocation, and thus conserves the redox energy in a proton gradient. The polypeptide is NAD(P)H-quinone oxidoreductase subunit I, chloroplastic (Cucumis sativus (Cucumber)).